We begin with the raw amino-acid sequence, 366 residues long: Tubulin-like protein CetZ (366 aa).

Residues 10–14, 103–105, E136, N163, and N181 contribute to the GTP site; these read QCGTK and GTG.

The protein belongs to the CetZ family.

It is found in the cytoplasm. Involved in cell shape control. This Pyrococcus furiosus (strain ATCC 43587 / DSM 3638 / JCM 8422 / Vc1) protein is Tubulin-like protein CetZ.